A 1856-amino-acid chain; its full sequence is Protein TANC1 (1856 aa).

Met1 bears the N-acetylmethionine mark. 5 disordered regions span residues 1–45 (MLKA…LSTT), 58–130 (SMSL…SCSP), 203–222 (KSPCETISSPSSTLESKDSG), 262–296 (RADNCSPVAEEETTGSAESVLPKAEPSAGDGPVPY), and 437–489 (IASS…RPRE). Over residues 8–21 (KSREGGKGSKKEAG) the composition is skewed to basic and acidic residues. Over residues 29–45 (PALSSSGDSPVNSLSTT) the composition is skewed to polar residues. 6 positions are modified to phosphoserine: Ser60, Ser63, Ser64, Ser204, Ser267, and Ser462. The span at 60–77 (SLPSSPLLPRQSLLTQSR) shows a compositional bias: low complexity. A compositionally biased stretch (polar residues) spans 203–216 (KSPCETISSPSSTL). Positions 439-475 (SSSPSLSPKSSDPTQDLPGTPLLSPSSSTSALSVTRT) are enriched in low complexity. ANK repeat units follow at residues 893–925 (EGLSAALASLRNLYTPNVKVSRLLILGGANVNY), 931–960 (NNAPILCVQSHLGHEEVVTLLLEFGACLDG), 964–993 (NGMNALCYAAAAGHMKLVCLLIKKGARVDH), 997–1026 (KGQCALVHSALRGHSDILQYLLNCEWSAGP), 1037–1066 (ALQQALTAAASMGHSSVVQSLLGMAEEHEI), 1075–1104 (WGETALTAAAGRGKVEICELLLERGAAVSR), 1108–1137 (RGVPPLFCAARQGHWQVVRLLLDRGCDVNL), 1141–1170 (QGRTPLMVASCEGHLSTVEFLLSKGAALSS), 1174–1203 (EGLSALSWACLKGHRAVVQYLVEEGAEIDQ), 1207–1236 (NGRTPLDLAAFYGDAETVLYLVEKGAVIEH), and 1240–1269 (SGMRPLDRAIGCRNTAVVVTLLRKGAKLGN). TPR repeat units follow at residues 1286–1319 (LQKLVEEGNVMYKKGKMKEAAQRYQYALRKFPRE), 1333–1366 (VSLYLNLSRCRRKTNDFGLAEEFASKALELKPKS), and 1368–1400 (EAFYARARAKRNSRQFLAALADLQEAVKLCPNN). A compositionally biased stretch (low complexity) spans 1417–1426 (LQRNQQQKQQ). 3 disordered regions span residues 1417-1597 (LQRN…FGDR), 1636-1720 (DMAP…NTPF), and 1832-1856 (HVSTEAHRSHLTSAKPKRSFIESNV). A phosphoserine mark is found at Ser1436 and Ser1463. Positions 1454-1463 (EEAEEEDTSS) are enriched in acidic residues. 2 stretches are compositionally biased toward polar residues: residues 1490–1505 (EGLQSKGRSASPQSRA) and 1524–1556 (PTKQAQIVKTNQHLGSGQSSMRNSSTKIQVSSQ). Low complexity predominate over residues 1656–1686 (SLSSSGSSGSPSSSIKMSSSTSSLTSSSSVS). Phosphoserine occurs at positions 1665, 1673, and 1674.

This sequence belongs to the TANC family. Interacts probably directly with DLG1, DLG4, HOMER1. Interacts with DLGAP1, INA, CAMK2A, GRIN2B and GRIA1. Interacts with TNIK and MINK1. Post-translationally, phosphorylated; by MINK1 and TNIK upon stimulation by RAP2A.

The protein resides in the postsynaptic density. Its function is as follows. May be a scaffold component in the postsynaptic density. In Mus musculus (Mouse), this protein is Protein TANC1 (Tanc1).